The following is a 52-amino-acid chain: Sperm protamine P1 (52 aa).

This sequence belongs to the protamine P1 family. Cross-linked by interchain disulfide bonds around the DNA-helix. As to expression, testis.

It is found in the nucleus. Its subcellular location is the chromosome. Functionally, protamines substitute for histones in the chromatin of sperm during the haploid phase of spermatogenesis. They compact sperm DNA into a highly condensed, stable and inactive complex. This Alouatta seniculus (Red howler monkey) protein is Sperm protamine P1 (PRM1).